The sequence spans 138 residues: Cysteine desulfuration protein SufE (138 aa).

Cysteine 51 acts as the Cysteine persulfide intermediate in catalysis.

Belongs to the SufE family. Homodimer. Interacts with SufS.

The protein localises to the cytoplasm. It participates in cofactor biosynthesis; iron-sulfur cluster biosynthesis. Its function is as follows. Participates in cysteine desulfuration mediated by SufS. Cysteine desulfuration mobilizes sulfur from L-cysteine to yield L-alanine and constitutes an essential step in sulfur metabolism for biosynthesis of a variety of sulfur-containing biomolecules. Functions as a sulfur acceptor for SufS, by mediating the direct transfer of the sulfur atom from the S-sulfanylcysteine of SufS, an intermediate product of cysteine desulfuration process. This is Cysteine desulfuration protein SufE from Salmonella dublin (strain CT_02021853).